We begin with the raw amino-acid sequence, 227 residues long: Cytochrome c oxidase subunit 2 (227 aa).

The Mitochondrial intermembrane segment spans residues 1–14 (MAYPFQLGLQDATS). The helical transmembrane segment at 15–45 (PIMEELTSFHDHTLMIVFLISSLVLYIILLM) threads the bilayer. The Mitochondrial matrix segment spans residues 46–59 (LTTKLTHTSTMDAQ). Residues 60–87 (EVETIWTILPAVILILIALPSLRILYMM) traverse the membrane as a helical segment. Residues 88-227 (DEINNPALTV…HFENWSASMI (140 aa)) are Mitochondrial intermembrane-facing. Cu cation is bound by residues H161, C196, E198, C200, H204, and M207. A Mg(2+)-binding site is contributed by E198.

Belongs to the cytochrome c oxidase subunit 2 family. In terms of assembly, component of the cytochrome c oxidase (complex IV, CIV), a multisubunit enzyme composed of 14 subunits. The complex is composed of a catalytic core of 3 subunits MT-CO1, MT-CO2 and MT-CO3, encoded in the mitochondrial DNA, and 11 supernumerary subunits COX4I, COX5A, COX5B, COX6A, COX6B, COX6C, COX7A, COX7B, COX7C, COX8 and NDUFA4, which are encoded in the nuclear genome. The complex exists as a monomer or a dimer and forms supercomplexes (SCs) in the inner mitochondrial membrane with NADH-ubiquinone oxidoreductase (complex I, CI) and ubiquinol-cytochrome c oxidoreductase (cytochrome b-c1 complex, complex III, CIII), resulting in different assemblies (supercomplex SCI(1)III(2)IV(1) and megacomplex MCI(2)III(2)IV(2)). Found in a complex with TMEM177, COA6, COX18, COX20, SCO1 and SCO2. Interacts with TMEM177 in a COX20-dependent manner. Interacts with COX20. Interacts with COX16. Cu cation is required as a cofactor.

It localises to the mitochondrion inner membrane. The enzyme catalyses 4 Fe(II)-[cytochrome c] + O2 + 8 H(+)(in) = 4 Fe(III)-[cytochrome c] + 2 H2O + 4 H(+)(out). Functionally, component of the cytochrome c oxidase, the last enzyme in the mitochondrial electron transport chain which drives oxidative phosphorylation. The respiratory chain contains 3 multisubunit complexes succinate dehydrogenase (complex II, CII), ubiquinol-cytochrome c oxidoreductase (cytochrome b-c1 complex, complex III, CIII) and cytochrome c oxidase (complex IV, CIV), that cooperate to transfer electrons derived from NADH and succinate to molecular oxygen, creating an electrochemical gradient over the inner membrane that drives transmembrane transport and the ATP synthase. Cytochrome c oxidase is the component of the respiratory chain that catalyzes the reduction of oxygen to water. Electrons originating from reduced cytochrome c in the intermembrane space (IMS) are transferred via the dinuclear copper A center (CU(A)) of subunit 2 and heme A of subunit 1 to the active site in subunit 1, a binuclear center (BNC) formed by heme A3 and copper B (CU(B)). The BNC reduces molecular oxygen to 2 water molecules using 4 electrons from cytochrome c in the IMS and 4 protons from the mitochondrial matrix. The protein is Cytochrome c oxidase subunit 2 (MT-CO2) of Anisomys imitator (Uneven-toothed rat).